We begin with the raw amino-acid sequence, 994 residues long: Sarcoplasmic/endoplasmic reticulum calcium ATPase 1 (994 aa).

Residues 1–48 (MENAHAKTAEECLAFFGVNESVGLSGEQVRRALEKYGHNELPAEEGKT) lie on the Cytoplasmic side of the membrane. A helical membrane pass occupies residues 49–69 (IWELVVEQFEDLLVRILLLAA). Residues 70–89 (CISFVLAWFEEGEETITAFV) are Lumenal-facing. A helical membrane pass occupies residues 90–110 (EPFVILLILIANAVVGVWQER). At 111–253 (NAENAIEALK…QDKTPLQQKL (143 aa)) the chain is on the cytoplasmic side. Residues 254–273 (DEFGEQLSKVISLICVAVWL) traverse the membrane as a helical segment. The Lumenal portion of the chain corresponds to 274–295 (INIGHFNDPVHGGSWIRGAIYY). The helical transmembrane segment at 296-313 (FKIAVALAVAAIPEGLPA) threads the bilayer. Residues Val-304, Ala-305, Ile-307, and Glu-309 each contribute to the Ca(2+) site. At 314–757 (VITTCLALGT…EEGRAIYNNM (444 aa)) the chain is on the cytoplasmic side. Asp-351 serves as the catalytic 4-aspartylphosphate intermediate. Residues Asp-351 and Thr-353 each coordinate Mg(2+). ATP contacts are provided by Thr-353, Glu-442, Arg-489, Lys-515, Arg-560, Thr-625, Gly-626, Asp-627, Arg-678, and Lys-684. Residue Asp-703 coordinates Mg(2+). Asn-706 lines the ATP pocket. Residues 758-777 (KQFIRYLISSNVGEVVCIFL) traverse the membrane as a helical segment. 2 residues coordinate Ca(2+): Asn-768 and Glu-771. Topologically, residues 778–787 (TAALGLPEAL) are lumenal. The chain crosses the membrane as a helical span at residues 788 to 808 (IPVQLLWVNLVTDGLPATALG). Positions 788-808 (IPVQLLWVNLVTDGLPATALG) are interaction with PLN. The Ca(2+) site is built by Asn-796, Thr-799, and Asp-800. Over 809–828 (FNPPDLDIMDKPPRSPKEPL) the chain is Cytoplasmic. The chain crosses the membrane as a helical span at residues 829–851 (ISGWLFFRYLAIGGYVGAATVGA). Topologically, residues 852–897 (AAWWFLYAEDGPSLTYHQLTHFMQCTHHNAEFEGVDCDIFESPVPM) are lumenal. The cysteines at positions 876 and 888 are disulfide-linked. The helical transmembrane segment at 898-917 (TMALSVLVTIEMCNALNSLS) threads the bilayer. Glu-908 provides a ligand contact to Ca(2+). Topologically, residues 918–930 (ENQSLLRMPPWVN) are cytoplasmic. A helical transmembrane segment spans residues 931 to 949 (IWLVGSICLSMSLHFVILY). The tract at residues 932-943 (WLVGSICLSMSL) is interaction with PLN. At 950-964 (VDPLPMIFKLTHLDL) the chain is on the lumenal side. A helical membrane pass occupies residues 965–985 (AHWLVVLRISFPVILLDEALK). Topologically, residues 986–994 (FVARNYLEA) are cytoplasmic.

It belongs to the cation transport ATPase (P-type) (TC 3.A.3) family. Type IIA subfamily. In terms of assembly, interacts with sarcolipin (SLN). Interacts with phospholamban (PLN). Interacts with myoregulin (MRLN). Interacts with DWORF. Requires Mg(2+) as cofactor.

It is found in the endoplasmic reticulum membrane. The protein localises to the sarcoplasmic reticulum membrane. It carries out the reaction Ca(2+)(in) + ATP + H2O = Ca(2+)(out) + ADP + phosphate + H(+). Inhibited by sarcolipin (SLN) and myoregulin (MRLN). Also shown to be inhibited by phospholamban (PLN) in vitro. Enhanced by DWORF; DWORF increases activity by displacing sarcolipin (SLN), phospholamban (PLN) and myoregulin (MRLN). In terms of biological role, key regulator of striated muscle performance by acting as the major Ca(2+) ATPase responsible for the reuptake of cytosolic Ca(2+) into the sarcoplasmic reticulum. Catalyzes the hydrolysis of ATP coupled with the translocation of calcium from the cytosol to the sarcoplasmic reticulum lumen. Contributes to calcium sequestration involved in muscular excitation/contraction. The polypeptide is Sarcoplasmic/endoplasmic reticulum calcium ATPase 1 (ATP2A1) (Gallus gallus (Chicken)).